We begin with the raw amino-acid sequence, 124 residues long: Replication restart protein PriB (124 aa).

The 101-residue stretch at 12–112 folds into the SSB domain; the sequence is IDNCLILSGS…VHAEHIEFID (101 aa).

It belongs to the PriB family. As to quaternary structure, homodimer. Interacts with PriA and DnaT. Component of the replication restart primosome. Primosome assembly occurs via a 'hand-off' mechanism. PriA binds to replication forks, subsequently PriB then DnaT bind; DnaT then displaces ssDNA to generate the helicase loading substrate.

Functionally, involved in the restart of stalled replication forks, which reloads the replicative helicase on sites other than the origin of replication; the PriA-PriB pathway is the major replication restart pathway. During primosome assembly it facilitates complex formation between PriA and DnaT on DNA; stabilizes PriA on DNA. Stimulates the DNA unwinding activity of PriA helicase. This Actinobacillus pleuropneumoniae serotype 5b (strain L20) protein is Replication restart protein PriB.